The chain runs to 629 residues: tRNA uridine 5-carboxymethylaminomethyl modification enzyme MnmG (629 aa).

Position 13–18 (13–18 (GGGHAG)) interacts with FAD. Residue 273 to 287 (GPRYCPSIEDKVVRF) coordinates NAD(+).

The protein belongs to the MnmG family. Homodimer. Heterotetramer of two MnmE and two MnmG subunits. FAD serves as cofactor.

The protein resides in the cytoplasm. In terms of biological role, NAD-binding protein involved in the addition of a carboxymethylaminomethyl (cmnm) group at the wobble position (U34) of certain tRNAs, forming tRNA-cmnm(5)s(2)U34. This chain is tRNA uridine 5-carboxymethylaminomethyl modification enzyme MnmG, found in Nitrosococcus oceani (strain ATCC 19707 / BCRC 17464 / JCM 30415 / NCIMB 11848 / C-107).